A 114-amino-acid chain; its full sequence is MTPDELARLTGYSRQTINKWVRKEGWTTSPKPGVQGGKARLVHVNEQVREYIRNAERPEGQGEAPALSGDAPLEVLLVTLAKEMTPVEQKQFTSLLLREGIIGLLQRLGIRDSK.

It to E.coli YfiI and P.aeruginosa RluD.

This is an uncharacterized protein from Escherichia coli O6:H1 (strain CFT073 / ATCC 700928 / UPEC).